Reading from the N-terminus, the 1181-residue chain is MAKRGYKLQEFLAHSANVNCLSIGKKTSRLFITGGDDYKVNLWAIGKPTSLMSLCGHTSAVDSVAFDSAEVLVLAGASSGVIKLWDVEEAKMVRAFTGHRSNCSAVEFHPFGEFLASGSSDANLKIWDIRKKGCIQTYKGHSRGISTIRFTPDGRWVVSGGLDNVVKVWDLTAGKLLHEFKFHEGPIRSLDFHPLEFLLATGSADRTVKFWDLETFELIGSTRPEATGVRSIKFHPDGRTLFCGLDDSLKVYSWEPVVCHDGVDMGWSTLGDLCISEGKLLGCSYYQNSVGIWVSDISQIEPYGIGSADKKECVEKILSALDDQSFDRIKSTPRRSSSPDYETKEIKNIYIDSTGGNSAVAHKSGSLSTPATSTGQAGDNKSLVVHSVVPRDSDIGKDSSDSGKESITFSKTKPGMLLRPAYVRKTPTKFDETKKQSVAVGYLKKSGLDGEKKLDTETAFDSEMSGRNPYDADDSIIKSITNKFEQALLPESPTDEAKCMLLKPPRVQRSPSTKYNEARWATSTDSGALDSKKNGLESSRDMDLPTGLRDDRGSNPCEEDIENKSISSRSERVLSPEKAGDELKSLESPGGSKESKSVKVVRGVKVVSGRTRSLVERFERGEKITHSEDKAASATVVHSSNSVEEEPLTASVQTVSMMPTQVMPVKLDQATNSTTVDVPVLSTRRTKSTPVRVMPVVLGRDTSMATDTPPVTSTRPDRTSATNLTSDVSGVTSKRQTRTSPAPVMPMILNQTTKMKSDEPSITSTWPDRTSATDLTSDVSGVISSRQTRTSPAPVMPMKLNQKTKIKSDEPPITSTRPDRPSATNLTSDESPVTSTRQAKTSPAPVTPVILNQRQTTNMKSDEPPVISTRPLRTSSARVMPVILNQASTTYDERPLSSSRSARTSPARIMPMKLNQADNMPSYEPPVALTRSARNSPARVIPVKLNQATNVTADASHIRSRQRFSPTQTLATPAVFDQVTDMTLDETTKTQQSSDILTQKEEPQISGREDDGDIWEILMRTHSEVLNTLQSRLTKLQIVRHFWERSDIKGAIAALRKLSDHSVQADVINILTDKTEILTLDLFSQLAPVLTGLLGSKTERPVNVSLEMLLKLVAVFGTVIQSTVSARRVVGVDLHAEERLQICQSCSAELQKVQKILPLLTRRGGLIARKAQELNLVLQTP.

7 WD repeats span residues 13-53 (AHSA…SLMS), 56-95 (GHTS…MVRA), 98-137 (GHRS…CIQT), 140-181 (GHSR…HEFK), 183-221 (HEGP…LIGS), 224-264 (PEAT…DGVD), and 266-303 (GWST…IEPY). A DWD box motif is present at residues 114–130 (FLASGSSDANLKIWDIR). 5 disordered regions span residues 361-383 (AHKS…NKSL), 503-597 (KPPR…ESKS), 702-739 (TSMA…QTRT), 754-869 (KMKS…VIST), and 988-1008 (TKTQ…ISGR). Composition is skewed to polar residues over residues 365 to 379 (GSLS…QAGD) and 509 to 526 (RSPS…STDS). Composition is skewed to basic and acidic residues over residues 530–553 (DSKK…DDRG) and 569–585 (RSER…ELKS). Polar residues-rich tracts occupy residues 703–739 (SMAT…QTRT), 754–791 (KMKS…TRTS), 822–841 (SATN…QAKT), and 850–859 (ILNQRQTTNM). Residues 998–1008 (TQKEEPQISGR) show a composition bias toward basic and acidic residues.

It belongs to the WD repeat KATNB1 family. In terms of assembly, component of KTN80-KTN1 complexes composed of a hexamer of KTN1-KTN80 heterodimers that sense microtubule (MT) geometry to confer precise MT severing. Interacts directly with AAA1/KTN1. Interacts with subunits of the CUL4-based E3 ligase complex DDB1A and DDB1B. Expressed at low levels in siliques, flowers, leaves, stems and roots.

It is found in the cytoplasm. Its subcellular location is the cytoskeleton. Its function is as follows. May participate in a complex which severs microtubules in an ATP-dependent manner. Microtubule severing may promote rapid reorganization of cellular microtubule arrays. Confers precision to microtubule (MT) severing by specific targeting of KTN1 to MT cleavage sites such as crossover or branching nucleation sites. Together with other KTN80s, regulates cell elongation by modulating MT organization. Negative regulator of abscisic acid (ABA) responses. May function as a substrate receptor for cullin-RING ubiquitin ligase 4 complexes (CRL4), a family of E3 ligases involved in protein degradation. This Arabidopsis thaliana (Mouse-ear cress) protein is Katanin p80 WD40 repeat-containing subunit B1 homolog KTN80.2.